A 79-amino-acid polypeptide reads, in one-letter code: Exodeoxyribonuclease 7 small subunit (79 aa).

This sequence belongs to the XseB family. In terms of assembly, heterooligomer composed of large and small subunits.

The protein localises to the cytoplasm. The enzyme catalyses Exonucleolytic cleavage in either 5'- to 3'- or 3'- to 5'-direction to yield nucleoside 5'-phosphates.. Functionally, bidirectionally degrades single-stranded DNA into large acid-insoluble oligonucleotides, which are then degraded further into small acid-soluble oligonucleotides. The chain is Exodeoxyribonuclease 7 small subunit from Geobacillus kaustophilus (strain HTA426).